The chain runs to 166 residues: Crossover junction endodeoxyribonuclease RuvC (166 aa).

Residues Asp11, Glu70, and Asp142 contribute to the active site. Asp11, Glu70, and Asp142 together coordinate Mg(2+).

Belongs to the RuvC family. Homodimer which binds Holliday junction (HJ) DNA. The HJ becomes 2-fold symmetrical on binding to RuvC with unstacked arms; it has a different conformation from HJ DNA in complex with RuvA. In the full resolvosome a probable DNA-RuvA(4)-RuvB(12)-RuvC(2) complex forms which resolves the HJ. Mg(2+) is required as a cofactor.

The protein localises to the cytoplasm. The enzyme catalyses Endonucleolytic cleavage at a junction such as a reciprocal single-stranded crossover between two homologous DNA duplexes (Holliday junction).. The RuvA-RuvB-RuvC complex processes Holliday junction (HJ) DNA during genetic recombination and DNA repair. Endonuclease that resolves HJ intermediates. Cleaves cruciform DNA by making single-stranded nicks across the HJ at symmetrical positions within the homologous arms, yielding a 5'-phosphate and a 3'-hydroxyl group; requires a central core of homology in the junction. The consensus cleavage sequence is 5'-(A/T)TT(C/G)-3'. Cleavage occurs on the 3'-side of the TT dinucleotide at the point of strand exchange. HJ branch migration catalyzed by RuvA-RuvB allows RuvC to scan DNA until it finds its consensus sequence, where it cleaves and resolves the cruciform DNA. The protein is Crossover junction endodeoxyribonuclease RuvC of Nitratidesulfovibrio vulgaris (strain ATCC 29579 / DSM 644 / CCUG 34227 / NCIMB 8303 / VKM B-1760 / Hildenborough) (Desulfovibrio vulgaris).